The following is a 270-amino-acid chain: Putative phosphatase YxeH (270 aa).

Aspartate 8 serves as the catalytic Nucleophile. Aspartate 8 serves as a coordination point for Mg(2+). Residue methionine 9 participates in phosphate binding. Aspartate 10 contributes to the Mg(2+) binding site. Phosphate contacts are provided by residues 42–43 and lysine 196; that span reads TG. Aspartate 219 contacts Mg(2+). Asparagine 222 provides a ligand contact to phosphate.

This sequence belongs to the HAD-like hydrolase superfamily. Cof family. Mg(2+) is required as a cofactor.

The sequence is that of Putative phosphatase YxeH (yxeH) from Bacillus subtilis (strain 168).